The primary structure comprises 401 residues: DNA damage checkpoint control protein RAD17 (401 aa).

Residues 367 to 393 (KKIKLPSEEENNKNRESEDEENHCKYP) are disordered. A compositionally biased stretch (basic and acidic residues) spans 371–393 (LPSEEENNKNRESEDEENHCKYP). Ser383 carries the phosphoserine modification.

The protein belongs to the rad1 family. Component of the checkpoint clamp complex composed of DDC1, MEC3 and RAD17. The interaction with MEC3 is performed in a RAD17-dependent manner. The checkpoint clamp complex loads onto DNA. Interacts with the DNA polymerase zeta subunit REV7. 2 RAD17 subunits also form a heterotrimer with one MEC3 subunit.

Its subcellular location is the nucleus. In terms of biological role, component of the checkpoint clamp complex involved in the surveillance mechanism that allows the DNA repair pathways to act to restore the integrity of the DNA prior to DNA synthesis or separation of the replicated chromosomes. Associates with sites of DNA damage and modulates the MEC1 signaling pathway and the activation of RAD53 in response to DNA damage at phase G1. The complex also physically regulates DNA polymerase zeta-dependent mutagenesis by controlling the access of polymerase zeta to damaged DNA. Contrary to its human counterpart, the 9-1-1 complex, the checkpoint clamp complex shows no detectable exonuclease activity. The protein is DNA damage checkpoint control protein RAD17 (RAD17) of Saccharomyces cerevisiae (strain ATCC 204508 / S288c) (Baker's yeast).